Here is a 265-residue protein sequence, read N- to C-terminus: 4-hydroxy-tetrahydrodipicolinate reductase (265 aa).

NAD(+)-binding positions include 7–12 (GASGRM) and Asp33. Arg34 serves as a coordination point for NADP(+). Residues 96 to 98 (GTT) and 120 to 123 (AANM) contribute to the NAD(+) site. The Proton donor/acceptor role is filled by His153. (S)-2,3,4,5-tetrahydrodipicolinate is bound at residue His154. The Proton donor role is filled by Lys157. 163–164 (GT) is a binding site for (S)-2,3,4,5-tetrahydrodipicolinate.

It belongs to the DapB family.

It localises to the cytoplasm. It carries out the reaction (S)-2,3,4,5-tetrahydrodipicolinate + NAD(+) + H2O = (2S,4S)-4-hydroxy-2,3,4,5-tetrahydrodipicolinate + NADH + H(+). It catalyses the reaction (S)-2,3,4,5-tetrahydrodipicolinate + NADP(+) + H2O = (2S,4S)-4-hydroxy-2,3,4,5-tetrahydrodipicolinate + NADPH + H(+). It functions in the pathway amino-acid biosynthesis; L-lysine biosynthesis via DAP pathway; (S)-tetrahydrodipicolinate from L-aspartate: step 4/4. Its function is as follows. Catalyzes the conversion of 4-hydroxy-tetrahydrodipicolinate (HTPA) to tetrahydrodipicolinate. The polypeptide is 4-hydroxy-tetrahydrodipicolinate reductase (Burkholderia ambifaria (strain MC40-6)).